Reading from the N-terminus, the 918-residue chain is Bromodomain testis-specific protein (918 aa).

A disordered region spans residues 1–26; sequence MSDVKPPQHFTMNGNPPPPEFKNPKK. Residues 29–135 form the Bromo 1 domain; the sequence is RLTNHLQYIE…KLFLEKVAEM (107 aa). The Nuclear localization signal motif lies at 204–215; the sequence is NGVKRKADTTTP. Disordered stretches follow at residues 241-267, 379-430, 575-712, 738-764, and 862-899; these read RGSG…GRRT, EPKN…RAHR, KNKP…SLVS, IPPL…SSSQ, and DTPK…AMSG. The Bromo 2 domain maps to 267–376; that stretch reads TKLSERLKYC…DVFEFRFSKI (110 aa). A compositionally biased stretch (low complexity) spans 399 to 416; it reads SPSSSESSDSESSSPENS. Residues 426–452 are a coiled coil; that stretch reads ERAHRLASLEEQQLKAVREQLQLLTQT. Positions 496–578 constitute an NET domain; sequence DSEEEMNTLP…GCLRKKKNKP (83 aa). Over residues 575–584 the composition is skewed to basic residues; the sequence is KNKPPKKSKI. Basic and acidic residues predominate over residues 605-617; that stretch reads KIETDGEIKDTTH. 2 stretches are compositionally biased toward low complexity: residues 622–648 and 739–764; these read SDSS…DSDS and PPLL…SSSQ. Residues 815–902 are a coiled coil; that stretch reads EKELTTASRG…RREAMSGVID (88 aa). Residues 877 to 896 are compositionally biased toward basic and acidic residues; it reads VDREREMARKREQERRRREA.

This sequence belongs to the BET family.

The protein resides in the nucleus. Testis-specific chromatin protein that specifically binds histone H4 acetylated at 'Lys-5' and 'Lys-8' (H4K5ac and H4K8ac, respectively) and plays a key role in spermatogenesis. Required in late pachytene spermatocytes: plays a role in meiotic and post-meiotic cells by binding to acetylated histones at the promoter of specific meiotic and post-meiotic genes, facilitating their activation at the appropriate time. In the post-meiotic phase of spermatogenesis, binds to hyperacetylated histones and participates in their general removal from DNA. Also recognizes and binds a subset of butyrylated histones: able to bind histone H4 butyrylated at 'Lys-8' (H4K8ac), while it is not able to bind H4 butyrylated at 'Lys-5' (H4K5ac). The chain is Bromodomain testis-specific protein (brdt) from Danio rerio (Zebrafish).